A 298-amino-acid polypeptide reads, in one-letter code: Ethanolamine ammonia-lyase small subunit (298 aa).

Adenosylcob(III)alamin is bound by residues V210, E231, and C261.

It belongs to the EutC family. The basic unit is a heterodimer which dimerizes to form tetramers. The heterotetramers trimerize; 6 large subunits form a core ring with 6 small subunits projecting outwards. It depends on adenosylcob(III)alamin as a cofactor.

It localises to the bacterial microcompartment. The catalysed reaction is ethanolamine = acetaldehyde + NH4(+). Its pathway is amine and polyamine degradation; ethanolamine degradation. Catalyzes the deamination of various vicinal amino-alcohols to oxo compounds. Allows this organism to utilize ethanolamine as the sole source of nitrogen and carbon in the presence of external vitamin B12. The protein is Ethanolamine ammonia-lyase small subunit of Salmonella dublin (strain CT_02021853).